A 254-amino-acid polypeptide reads, in one-letter code: Protein Thf1 (254 aa).

A coiled-coil region spans residues 183–217; that stretch reads SDKLQKDLDLYRSNLEKMEQARITMEEAIQADRRK. The span at 213-227 shows a compositional bias: basic and acidic residues; it reads ADRRKREQREQEKLA. The interval 213–254 is disordered; sequence ADRRKREQREQEKLAKAAAAEAPAALEASSDNPEPETSETPS. Low complexity predominate over residues 228 to 240; that stretch reads KAAAAEAPAALEA. Residues 245 to 254 are compositionally biased toward acidic residues; it reads PEPETSETPS.

This sequence belongs to the THF1 family.

In terms of biological role, may be involved in photosynthetic membrane biogenesis. The protein is Protein Thf1 of Synechococcus elongatus (strain ATCC 33912 / PCC 7942 / FACHB-805) (Anacystis nidulans R2).